The sequence spans 387 residues: MDISKVDSTRALVNHWRIFRIMGIHPPGKRTFWGRHYTAYSMVWNVTFHICIWVSFSVNLLQSNSLETFCESLCVTMPHTLYMLKLINVRRMRGQMISSHWLLRLLDKRLGCDDERQIIMAGIERAEFIFRTIFRGLACTVVLGIIYISASSEPTLMYPTWIPWNWRDSTSAYLATAMLHTTALMANATLVLNLSSYPGTYLILVSVHTKALALRVSKLGYGAPLPAVRMQAILVGYIHDHQIILRLFKSLERSLSMTCFLQFFSTACAQCTICYFLLFGNVGIMRFMNMLFLLVILTTETLLLCYTAELPCKEGESLLTAVYSCNWLSQSVNFRRLLLLMLARCQIPMILVSGVIVPISMKTFTVMIKGAYTMLTLLNEIRKTSLE.

Residues 1–40 lie on the Cytoplasmic side of the membrane; the sequence is MDISKVDSTRALVNHWRIFRIMGIHPPGKRTFWGRHYTAY. Residues 41 to 61 traverse the membrane as a helical segment; sequence SMVWNVTFHICIWVSFSVNLL. Over 62–71 the chain is Extracellular; the sequence is QSNSLETFCE. Residues 72–92 form a helical membrane-spanning segment; sequence SLCVTMPHTLYMLKLINVRRM. Residues 93–127 are Cytoplasmic-facing; sequence RGQMISSHWLLRLLDKRLGCDDERQIIMAGIERAE. Residues 128-148 traverse the membrane as a helical segment; the sequence is FIFRTIFRGLACTVVLGIIYI. Residues 149–171 lie on the Extracellular side of the membrane; the sequence is SASSEPTLMYPTWIPWNWRDSTS. A helical transmembrane segment spans residues 172 to 192; that stretch reads AYLATAMLHTTALMANATLVL. Topologically, residues 193-254 are cytoplasmic; sequence NLSSYPGTYL…LRLFKSLERS (62 aa). Residues 255–275 traverse the membrane as a helical segment; sequence LSMTCFLQFFSTACAQCTICY. Residues 276–285 are Extracellular-facing; sequence FLLFGNVGIM. Residues 286 to 306 form a helical membrane-spanning segment; the sequence is RFMNMLFLLVILTTETLLLCY. The Cytoplasmic segment spans residues 307-336; sequence TAELPCKEGESLLTAVYSCNWLSQSVNFRR. A helical transmembrane segment spans residues 337–357; the sequence is LLLLMLARCQIPMILVSGVIV. Over 358 to 387 the chain is Extracellular; sequence PISMKTFTVMIKGAYTMLTLLNEIRKTSLE.

It belongs to the insect chemoreceptor superfamily. Heteromeric odorant receptor channel (TC 1.A.69) family. Or2a subfamily. Interacts with Orco. Complexes exist early in the endomembrane system in olfactory sensory neurons (OSNs), coupling these complexes to the conserved ciliary trafficking pathway. As to expression, expressed in ai2A olfactory sensory neurons in the antenna.

It is found in the cell membrane. Odorant receptor which mediates acceptance or avoidance behavior, depending on its substrates. The odorant receptor repertoire encodes a large collection of odor stimuli that vary widely in identity, intensity, and duration. May form a complex with Orco to form odorant-sensing units, providing sensitive and prolonged odorant signaling and calcium permeability. Involved in the preference for citrus fruits for oviposition, especially through the response to valencene, the primary ligand of Or19a. Larvae growing on citrus fruits suffer a reduced risk of parasitism since endoparasitoid wasps that parasitize larvae are strongly repelled by the smell of citrus, as well as by valencene. The polypeptide is Odorant receptor 19a (Or19a) (Drosophila melanogaster (Fruit fly)).